We begin with the raw amino-acid sequence, 148 residues long: Large ribosomal subunit protein uL15 (148 aa).

Over residues 1 to 30 (MPSKLRKTRKLRGHVSHGHGRIGKHRKHPG) the composition is skewed to basic residues. The disordered stretch occupies residues 1–38 (MPSKLRKTRKLRGHVSHGHGRIGKHRKHPGGRGNAGGM).

It belongs to the universal ribosomal protein uL15 family. In terms of assembly, component of the large ribosomal subunit.

Its subcellular location is the cytoplasm. Its function is as follows. Component of the large ribosomal subunit. The ribosome is a large ribonucleoprotein complex responsible for the synthesis of proteins in the cell. The polypeptide is Large ribosomal subunit protein uL15 (rpl27a) (Xenopus laevis (African clawed frog)).